The chain runs to 898 residues: Netrin receptor UNC5A (898 aa).

Residues Met1–Ala25 form the signal peptide. The Extracellular portion of the chain corresponds to Gln26–Leu361. The 98-residue stretch at Pro44–Tyr141 folds into the Ig-like domain. 3 disulfides stabilise this stretch: Cys65–Cys126, Cys77–Cys124, and Cys170–Cys221. 2 N-linked (GlcNAc...) asparagine glycosylation sites follow: Asn107 and Asn218. Positions Pro155–Ser234 constitute an Ig-like C2-type domain. 2 consecutive TSP type-1 domains span residues Asn242 to Pro296 and Asp298 to Leu350. C-linked (Man) tryptophan glycans are attached at residues Trp245, Trp248, and Trp251. 3 disulfide bridges follow: Cys254/Cys291, Cys258/Cys295, and Cys269/Cys281. C-linked (Man) tryptophan glycosylation is found at Trp301 and Trp304. Disulfide bonds link Cys310-Cys344, Cys314-Cys349, and Cys322-Cys334. Asn343 carries N-linked (GlcNAc...) asparagine glycosylation. A helical membrane pass occupies residues Tyr362–Ile382. Residues Tyr383–Cys898 are Cytoplasmic-facing. The ZU5 domain maps to Asn497–Ala640. Residues Ser661–Lys679 are interaction with DCC. Residues Gln817–Glu897 enclose the Death domain.

It belongs to the unc-5 family. In terms of assembly, homodimer and homooligomer. Interacts with the cytoplasmic part of DCC. Interacts with MAGED1. Interacts with PRKCABP, possibly mediating some interaction with PKC. Interacts (via extracellular domain) with FLRT2 (via extracellular domain). Interacts (via extracellular domain) with FLRT3 (via extracellular domain). Phosphorylated on cytoplasmic tyrosine residues. Phosphorylated by PKC in vitro. In terms of processing, proteolytically cleaved by caspases during apoptosis. The cleavage does not take place when the receptor is associated with netrin ligand. Its cleavage by caspases is required to induce apoptosis. Post-translationally, the two extracellular TSRs of UNC5A contain WxxWxxWxxC motifs that can be C-mannosylated on all tryptophans. DPY19L1 preferentially mannosylates the first two tryptophans and DPY19L3 prefers the third. C-mannosylation by DPY19L1 is required for transport of UNC5A from the endoplasmic reticulum to the cell surface. In terms of tissue distribution, restricted to central nervous system.

The protein resides in the cell membrane. It is found in the membrane raft. It localises to the cell projection. The protein localises to the neuron projection. Its function is as follows. Receptor for netrin required for axon guidance. Functions in the netrin signaling pathway and promotes neurite outgrowth in response to NTN1. Mediates axon repulsion of neuronal growth cones in the developing nervous system in response to netrin. Axon repulsion in growth cones may be mediated by its association with DCC that may trigger signaling for repulsion. It also acts as a dependence receptor required for apoptosis induction when not associated with netrin ligand. This is Netrin receptor UNC5A (Unc5a) from Mus musculus (Mouse).